Reading from the N-terminus, the 373-residue chain is Glutamine synthetase (373 aa).

Ala2 is subject to N-acetylalanine. Residues 2 to 25 (ATSASSHLNKGIKQMYMNLPQGEK) form a required for glutamine-induced ubiquitination by CRL4(CRBN) and proteasomal degradation region. An N6-acetyllysine mark is found at Lys11 and Lys14. The GS beta-grasp domain maps to 24-106 (EKIQLMYIWV…VFCEVFKYNR (83 aa)). Tyr104 carries the phosphotyrosine modification. The GS catalytic domain occupies 113 to 373 (LRHSCKRIMD…TGDEPFQYKN (261 aa)). Glu134 provides a ligand contact to ATP. Residues Glu134, Glu136, Glu196, and Glu203 each contribute to the Mn(2+) site. 203–208 (EFQIGP) lines the ATP pocket. An L-glutamate-binding site is contributed by 246-247 (NW). Mn(2+) is bound at residue His253. Residues 255–257 (NFS), Arg319, and Arg324 contribute to the ATP site. Arg319 provides a ligand contact to L-glutamate. Residue 336-338 (YFE) coordinates ADP. Glu338 is a Mn(2+) binding site. Arg340 provides a ligand contact to L-glutamate. The residue at position 343 (Ser343) is a Phosphoserine.

The protein belongs to the glutamine synthetase family. In terms of assembly, decamer; composed of two pentamers. Interacts with PALMD. Interacts with RHOJ. Interacts with BEST2; this interaction tethers a fraction of GLUL to the membrane, causing a decrease of cytosolic glutamine synthase (GS) activity and inhibits the chloride channel activity of BEST2 by affecting the gating at the aperture in the absence of intracellular glutamate. The cofactor is Mg(2+). It depends on Mn(2+) as a cofactor. Palmitoylated; undergoes autopalmitoylation. Post-translationally, acetylated by EP300/p300; acetylation is stimulated by increased glutamine levels and promotes ubiquitin-mediated proteasomal degradation. In terms of processing, ubiquitinated by ZNRF1. Ubiquitinated by the DCX (DDB1-CUL4-X-box) E3 ubiquitin-protein ligase complex called CRL4(CRBN), leading to proteasomal degradation. As to expression, in the adult liver, expression is restricted to a small population of hepatocytes which form only a small rim of one to three hepatocytes around the central veins. Expressed in lung microvascular endothelial cells.

The protein resides in the cytoplasm. It localises to the cytosol. Its subcellular location is the microsome. The protein localises to the mitochondrion. It is found in the cell membrane. It catalyses the reaction L-glutamate + NH4(+) + ATP = L-glutamine + ADP + phosphate + H(+). It carries out the reaction L-cysteinyl-[protein] + hexadecanoyl-CoA = S-hexadecanoyl-L-cysteinyl-[protein] + CoA. Glutamine synthetase activity is inhibited by methionine sulfoximine (MSO). Functionally, glutamine synthetase that catalyzes the ATP-dependent conversion of glutamate and ammonia to glutamine. Its role depends on tissue localization: in the brain, it regulates the levels of toxic ammonia and converts neurotoxic glutamate to harmless glutamine, whereas in the liver, it is one of the enzymes responsible for the removal of ammonia. Plays a key role in ammonium detoxification during erythropoiesis: the glutamine synthetase activity is required to remove ammonium generated by porphobilinogen deaminase (HMBS) during heme biosynthesis to prevent ammonium accumulation and oxidative stress. Essential for proliferation of fetal skin fibroblasts. Independently of its glutamine synthetase activity, required for endothelial cell migration during vascular development. Involved in angiogenesis by regulating membrane localization and activation of the GTPase RHOJ, possibly by promoting RHOJ palmitoylation. May act as a palmitoyltransferase for RHOJ: able to autopalmitoylate and then transfer the palmitoyl group to RHOJ. Plays a role in ribosomal 40S subunit biogenesis. Through the interaction with BEST2, inhibits BEST2 channel activity by affecting the gating at the aperture in the absence of intracellular L-glutamate, but sensitizes BEST2 to intracellular L-glutamate, which promotes the opening of BEST2 and thus relieves its inhibitory effect on BEST2. This Rattus norvegicus (Rat) protein is Glutamine synthetase.